The following is a 692-amino-acid chain: MGNSSSKSSKKDSHSNSSSRNPRPQVSRTETSHSVKSAKSNKSSRSRRSLPSSSTTNTNSNVPDPSTPSKPNLEVNHQRHSSHTNRYHFPSSSHSHSNSQNELLTTPSSSSTKRPSTSRRSSYNTKAAADLPPSMIQMEPKSPILKTNNSSTHVSKHKSSYSSTYYENALTDDDNDDKDNDISHTKRFSRSSNSRPSSIRSGSVSRRKSDVTHEEPNNGSYSSNNQENYLVQALTRSNSHASSLHSRKSSFGSDGNTAYSTPLNSPGLSKLTDHSGEYFTSNSTSSLNHHSSRDIYPSKHISNDDDIENSSQLSNIHASMENVNDKNNNITDSKKDPNEEFNDIMQSSGNKNAPKKFKKPIDIDETIQKLLDAGYAAKRTKNVCLKNNEILQICIKAREIFLSQPSLLELSPPVKIVGDVHGQYGDLLRLFTKCGFPPSSNYLFLGDYVDRGKQSLETILLLFCYKIKYPENFFLLRGNHECANVTRVYGFYDECKRRCNIKIWKTFIDTFNTLPLAAIVAGKIFCVHGGLSPVLNSMDEIRHVVRPTDVPDFGLINDLLWSDPTDSPNEWEDNERGVSYCYNKVAINKFLNKFGFDLVCRAHMVVEDGYEFFNDRSLVTVFSAPNYCGEFDNWGAVMSVSEGLLCSFELLDPLDSAALKQVMKKGRQERKLANQQQQMMETSITNDNESQQ.

2 disordered regions span residues 1 to 309 (MGNS…DIEN) and 321 to 357 (ENVNDKNNNITDSKKDPNEEFNDIMQSSGNKNAPKKF). A lipid anchor (N-myristoyl glycine) is attached at Gly-2. Composition is skewed to low complexity over residues 32–41 (SHSVKSAKSN), 49–69 (SLPSSSTTNTNSNVPDPSTPS), and 91–122 (SSSHSHSNSQNELLTTPSSSSTKRPSTSRRSS). Position 49 is a phosphoserine (Ser-49). Residues 170-179 (LTDDDNDDKD) show a composition bias toward acidic residues. Thr-171 bears the Phosphothreonine mark. The segment covering 190–204 (RSSNSRPSSIRSGSV) has biased composition (low complexity). A compositionally biased stretch (basic and acidic residues) spans 207-216 (RKSDVTHEEP). Phosphoserine occurs at positions 209 and 222. Composition is skewed to polar residues over residues 217 to 229 (NNGSYSSNNQENY) and 251 to 267 (FGSDGNTAYSTPLNSPG). Thr-261 bears the Phosphothreonine mark. The residue at position 265 (Ser-265) is a Phosphoserine. Low complexity predominate over residues 280 to 289 (TSNSTSSLNH). The segment covering 291–303 (SSRDIYPSKHISN) has biased composition (basic and acidic residues). Polar residues predominate over residues 321–331 (ENVNDKNNNIT). The Mn(2+) site is built by Asp-419, His-421, Asp-447, and Asn-479. The Proton donor role is filled by His-480. Positions 528 and 603 each coordinate Mn(2+). The segment at 672-692 (LANQQQQMMETSITNDNESQQ) is disordered. Positions 673-692 (ANQQQQMMETSITNDNESQQ) are enriched in polar residues. Ser-690 is modified (phosphoserine).

It belongs to the PPP phosphatase family. PP-Z subfamily. As to quaternary structure, interacts with SIS2 and VHS3, which regulate its activity. Mn(2+) serves as cofactor.

The catalysed reaction is O-phospho-L-seryl-[protein] + H2O = L-seryl-[protein] + phosphate. It catalyses the reaction O-phospho-L-threonyl-[protein] + H2O = L-threonyl-[protein] + phosphate. Its activity is regulated as follows. Inhibited by the regulatory subunits VHS3 and SIS2. Its function is as follows. Essential for the maintenance of cell size and integrity in response to osmotic stress. This is Serine/threonine-protein phosphatase PP-Z1 (PPZ1) from Saccharomyces cerevisiae (strain ATCC 204508 / S288c) (Baker's yeast).